We begin with the raw amino-acid sequence, 331 residues long: Ketol-acid reductoisomerase (NADP(+)) (331 aa).

The 180-residue stretch at 2-181 (TKVYYEDAVK…GATRAGVIET (180 aa)) folds into the KARI N-terminal Rossmann domain. NADP(+) is bound by residues 25–28 (YGSQ), Arg48, Ser52, and 82–85 (DETQ). The active site involves His107. An NADP(+)-binding site is contributed by Gly133. Positions 182–327 (TFKEETETDL…AELREMMPFV (146 aa)) constitute a KARI C-terminal knotted domain. Residues Asp190, Glu194, Glu226, and Glu230 each coordinate Mg(2+). Position 251 (Ser251) interacts with substrate.

This sequence belongs to the ketol-acid reductoisomerase family. Mg(2+) is required as a cofactor.

It carries out the reaction (2R)-2,3-dihydroxy-3-methylbutanoate + NADP(+) = (2S)-2-acetolactate + NADPH + H(+). It catalyses the reaction (2R,3R)-2,3-dihydroxy-3-methylpentanoate + NADP(+) = (S)-2-ethyl-2-hydroxy-3-oxobutanoate + NADPH + H(+). It functions in the pathway amino-acid biosynthesis; L-isoleucine biosynthesis; L-isoleucine from 2-oxobutanoate: step 2/4. It participates in amino-acid biosynthesis; L-valine biosynthesis; L-valine from pyruvate: step 2/4. In terms of biological role, involved in the biosynthesis of branched-chain amino acids (BCAA). Catalyzes an alkyl-migration followed by a ketol-acid reduction of (S)-2-acetolactate (S2AL) to yield (R)-2,3-dihydroxy-isovalerate. In the isomerase reaction, S2AL is rearranged via a Mg-dependent methyl migration to produce 3-hydroxy-3-methyl-2-ketobutyrate (HMKB). In the reductase reaction, this 2-ketoacid undergoes a metal-dependent reduction by NADPH to yield (R)-2,3-dihydroxy-isovalerate. In Listeria monocytogenes serovar 1/2a (strain ATCC BAA-679 / EGD-e), this protein is Ketol-acid reductoisomerase (NADP(+)).